Reading from the N-terminus, the 572-residue chain is Urease subunit alpha (572 aa).

The Urease domain occupies 134-572 (GGIDSHIHFI…LPLAQRYFLF (439 aa)). Ni(2+)-binding residues include His-139, His-141, and Lys-222. Lys-222 carries the N6-carboxylysine modification. Residue His-224 participates in substrate binding. His-251 and His-277 together coordinate Ni(2+). His-325 (proton donor) is an active-site residue. Asp-365 contacts Ni(2+).

Belongs to the metallo-dependent hydrolases superfamily. Urease alpha subunit family. As to quaternary structure, heterotrimer of UreA (gamma), UreB (beta) and UreC (alpha) subunits. Three heterotrimers associate to form the active enzyme. Ni cation serves as cofactor. Carboxylation allows a single lysine to coordinate two nickel ions.

It localises to the cytoplasm. It carries out the reaction urea + 2 H2O + H(+) = hydrogencarbonate + 2 NH4(+). Its pathway is nitrogen metabolism; urea degradation; CO(2) and NH(3) from urea (urease route): step 1/1. This is Urease subunit alpha from Paracidovorax citrulli (strain AAC00-1) (Acidovorax citrulli).